Reading from the N-terminus, the 185-residue chain is DAN domain family member 5 (185 aa).

The first 23 residues, 1–23 (MFRSQFTTLLGLFSGAWLPTGSG), serve as a signal peptide directing secretion. The N-linked (GlcNAc...) asparagine glycan is linked to Asn39. 4 disulfide bridges follow: Cys97–Cys144, Cys111–Cys158, Cys121–Cys179, and Cys125–Cys181. Residues 97–182 (CKALSFVQVI…TVLVQKCQCR (86 aa)) enclose the CTCK domain.

This sequence belongs to the DAN family. As to expression, expressed throughout the neural retina and in the photoreceptor nuclear layer. In the retina, widely expressed in inner nuclear layer, as well as in the ganglion cell layer.

It localises to the secreted. Its function is as follows. Antagonist of the extracellular signaling protein NODAL, which is required for correct left-right patterning during embryonic development. Antagonist of BMP4 signaling. Antagonist of TGF-beta signaling. Independently of its role in left-right axis establishment, plays a role during heart development, possibly through the regulation of TGF-beta/Nodal signaling pathway. Displays anti-angiogenic activity by inhibiting endothelial sprouting, migration, and proliferation. Once internalized by endothelial cells, may alter their redox and glycolytic balance. The chain is DAN domain family member 5 (Dand5) from Mus musculus (Mouse).